A 328-amino-acid chain; its full sequence is WUSCHEL-related homeobox 6 (328 aa).

Polar residues predominate over residues M1 to Q11. Residues M1 to P45 form a disordered region. Over residues G23 to S33 the composition is skewed to gly residues. A DNA-binding region (homeobox; WUS-type) is located at residues P38–Q102.

This sequence belongs to the WUS homeobox family.

It is found in the nucleus. Functionally, transcription factor which may be involved in developmental processes. The chain is WUSCHEL-related homeobox 6 (WOX6) from Oryza sativa subsp. indica (Rice).